The following is a 360-amino-acid chain: Peptide chain release factor 1 (360 aa).

Gln-235 bears the N5-methylglutamine mark. A disordered region spans residues 285-314 (KRQQAEASTRRNLLGSGDRSDRNRTYNFPQ).

This sequence belongs to the prokaryotic/mitochondrial release factor family. Methylated by PrmC. Methylation increases the termination efficiency of RF1.

The protein resides in the cytoplasm. Peptide chain release factor 1 directs the termination of translation in response to the peptide chain termination codons UAG and UAA. This is Peptide chain release factor 1 from Klebsiella pneumoniae subsp. pneumoniae (strain ATCC 700721 / MGH 78578).